The sequence spans 219 residues: Probable GTP-binding protein EngB (219 aa).

Residues 31-205 form the EngB-type G domain; it reads VGVEIAFAGR…LSILNEWCHP (175 aa). Residues 39–46, 66–70, 84–87, 151–154, and 184–186 contribute to the GTP site; these read GRSNAGKS, GRTQL, DLPG, TKSD, and FSS. Mg(2+) contacts are provided by S46 and T68.

The protein belongs to the TRAFAC class TrmE-Era-EngA-EngB-Septin-like GTPase superfamily. EngB GTPase family. It depends on Mg(2+) as a cofactor.

Functionally, necessary for normal cell division and for the maintenance of normal septation. The polypeptide is Probable GTP-binding protein EngB (Shewanella denitrificans (strain OS217 / ATCC BAA-1090 / DSM 15013)).